A 158-amino-acid chain; its full sequence is Ribosome maturation factor RimP (158 aa).

It belongs to the RimP family.

The protein resides in the cytoplasm. Functionally, required for maturation of 30S ribosomal subunits. The sequence is that of Ribosome maturation factor RimP from Pseudomonas fluorescens (strain ATCC BAA-477 / NRRL B-23932 / Pf-5).